The following is a 145-amino-acid chain: Male-specific protein scotti (145 aa).

The disordered stretch occupies residues 1–34; the sequence is MANNRLMPEGQIIEEDMDGEDQNARELDIDDDDD. The segment covering 12–21 has biased composition (acidic residues); that stretch reads IIEEDMDGED.

It belongs to the male-specific scotti family.

In terms of biological role, post-meiotically transcribed gene that has a role in late spermiogenesis; required for actin cone progression during spermatid individualization. The polypeptide is Male-specific protein scotti (Drosophila willistoni (Fruit fly)).